Here is a 335-residue protein sequence, read N- to C-terminus: Holliday junction branch migration complex subunit RuvB (335 aa).

The segment at alanine 4–tyrosine 184 is large ATPase domain (RuvB-L). Residues isoleucine 23, arginine 24, glycine 65, lysine 68, threonine 69, threonine 70, glutamate 131–tyrosine 133, arginine 174, tyrosine 184, and arginine 221 contribute to the ATP site. Position 69 (threonine 69) interacts with Mg(2+). Residues serine 185 to aspartate 255 are small ATPAse domain (RuvB-S). A head domain (RuvB-H) region spans residues glutamine 258–glutamate 335. DNA is bound by residues arginine 294, arginine 313, and arginine 318.

Belongs to the RuvB family. As to quaternary structure, homohexamer. Forms an RuvA(8)-RuvB(12)-Holliday junction (HJ) complex. HJ DNA is sandwiched between 2 RuvA tetramers; dsDNA enters through RuvA and exits via RuvB. An RuvB hexamer assembles on each DNA strand where it exits the tetramer. Each RuvB hexamer is contacted by two RuvA subunits (via domain III) on 2 adjacent RuvB subunits; this complex drives branch migration. In the full resolvosome a probable DNA-RuvA(4)-RuvB(12)-RuvC(2) complex forms which resolves the HJ.

It localises to the cytoplasm. The enzyme catalyses ATP + H2O = ADP + phosphate + H(+). Functionally, the RuvA-RuvB-RuvC complex processes Holliday junction (HJ) DNA during genetic recombination and DNA repair, while the RuvA-RuvB complex plays an important role in the rescue of blocked DNA replication forks via replication fork reversal (RFR). RuvA specifically binds to HJ cruciform DNA, conferring on it an open structure. The RuvB hexamer acts as an ATP-dependent pump, pulling dsDNA into and through the RuvAB complex. RuvB forms 2 homohexamers on either side of HJ DNA bound by 1 or 2 RuvA tetramers; 4 subunits per hexamer contact DNA at a time. Coordinated motions by a converter formed by DNA-disengaged RuvB subunits stimulates ATP hydrolysis and nucleotide exchange. Immobilization of the converter enables RuvB to convert the ATP-contained energy into a lever motion, pulling 2 nucleotides of DNA out of the RuvA tetramer per ATP hydrolyzed, thus driving DNA branch migration. The RuvB motors rotate together with the DNA substrate, which together with the progressing nucleotide cycle form the mechanistic basis for DNA recombination by continuous HJ branch migration. Branch migration allows RuvC to scan DNA until it finds its consensus sequence, where it cleaves and resolves cruciform DNA. This chain is Holliday junction branch migration complex subunit RuvB, found in Mannheimia succiniciproducens (strain KCTC 0769BP / MBEL55E).